Reading from the N-terminus, the 187-residue chain is Fibroblast growth factor 4A (187 aa).

The first 22 residues, 1-22 (MTVPSALVPILLLGTAAVMVQC), serve as a signal peptide directing secretion.

Belongs to the heparin-binding growth factors family.

The protein resides in the secreted. Its function is as follows. Plays an important role in the regulation of embryonic development, cell proliferation, and cell differentiation. Good candidate for an inducing factor with possible roles both in mesoderm induction at the blastula stage and in the formation of the anteroposterior axis at the gastrula stage. This is Fibroblast growth factor 4A (fgf4-a) from Xenopus laevis (African clawed frog).